A 7839-amino-acid polypeptide reads, in one-letter code: Nonribosomal peptide synthetase GRA1 (7839 aa).

Residues Met-1 to Gly-23 are compositionally biased toward polar residues. Residues Met-1 to Glu-26 form a disordered region. The tract at residues Leu-264–Ile-650 is adenylation 1. The Carrier 1 domain maps to Ser-793–Lys-866. Ser-827 carries the O-(pantetheine 4'-phosphoryl)serine modification. A condensation 1 region spans residues Asp-916–Ile-1332. Positions Phe-1351 to Arg-1742 are adenylation 2. The Carrier 2 domain occupies Glu-1880–Asp-1957. Ser-1918 is subject to O-(pantetheine 4'-phosphoryl)serine. Residues Asp-1997–Ile-2413 are condensation 2. The interval Phe-2432–Arg-2828 is adenylation 3. The 78-residue stretch at Ile-2963–Thr-3040 folds into the Carrier 3 domain. Position 3001 is an O-(pantetheine 4'-phosphoryl)serine (Ser-3001). A condensation 3 region spans residues Asp-3084–His-3496. The interval Arg-3520–Arg-3923 is adenylation 4. Positions Arg-4057–Ser-4134 constitute a Carrier 4 domain. An O-(pantetheine 4'-phosphoryl)serine modification is found at Ser-4095. The interval Asn-4234 to Ile-4569 is condensation 4. Residues His-4591–Phe-4982 form an adenylation 5 region. One can recognise a Carrier 5 domain in the interval Ala-5113 to Gln-5189. Ser-5150 carries the O-(pantetheine 4'-phosphoryl)serine modification. The segment at Glu-5224–Leu-5653 is condensation 5. The adenylation 6 stretch occupies residues Phe-5671 to Arg-6069. Positions Phe-6207 to Thr-6282 constitute a Carrier 6 domain. Ser-6243 carries the O-(pantetheine 4'-phosphoryl)serine modification. The segment at Gln-6321–Pro-6730 is condensation 6. Residues Glu-6756–Leu-7147 are adenylation 7. Positions Lys-7290–Ile-7366 constitute a Carrier 7 domain. O-(pantetheine 4'-phosphoryl)serine is present on Ser-7327. The tract at residues His-7404–Ser-7704 is condensation7.

This sequence belongs to the NRP synthetase family.

The protein operates within mycotoxin biosynthesis. Nonribosomal peptide synthetase; part of the gene cluster that mediates the biosynthesis of gramillins A and B, bicyclic lipopeptides that induce cell death in maize leaves but not in wheat leaves. The nonribosomal peptide synthetase GRA1 incorporates respectively a glutamic adic (Glu), a leucine (Leu), a serine (Ser), a hydroxyglutamine (HOGln), a 2-amino decanoic acid, and 2 cysteins (CysB and CysA). The biosynthesis of 2-amino decanoic acid incorporated in gramillins could be initiated by a fatty acid synthase composed of the alpha and beta subunits FGSG_00036 and FGSG_11656. The cytochrome P450 monooxygenase FGSG_15680 could hydroxylate the fatty acid chain. Subsequent oxidation to the ketone by the oxidoreductase FGSG_00048 and transamination by aminotransferase FGSG_00049 could form 2-amino-decanoic acid. On the other hand, FGSG_15680 could also be responsible for the HO-modified glutamine at the gamma-position. Whether hydroxylation occurs on the fully assembled product or on the Gln residue prior to assembly into the gramillins requires further proof. The thioredoxin FGSG_00043 could also be required for the disulfide-bond formation between CysA and CysB. The specific involvement of the remaining proteins from the cluster is more difficult to discern, but could have broader regulatory (FGSG_00040 and FGSG_11657) or enzymatic functions (FGSG_00044 and FGSG_00045). The final C-domain of GRA1 does not possess the expected sequence of a termination CT domain, often implicated in macrocyclization and release of a cyclopeptidein fungal NRPs; and the thioesterase FGSG_00047 may act in concert with the terminal C-domain of GRA1 to catalyze the formation of the macrocyclic anhydride and release of the products. The protein is Nonribosomal peptide synthetase GRA1 of Gibberella zeae (strain ATCC MYA-4620 / CBS 123657 / FGSC 9075 / NRRL 31084 / PH-1) (Wheat head blight fungus).